Reading from the N-terminus, the 190-residue chain is Nucleoside triphosphate pyrophosphatase (190 aa).

D69 acts as the Proton acceptor in catalysis.

This sequence belongs to the Maf family. It depends on a divalent metal cation as a cofactor.

It is found in the cytoplasm. It carries out the reaction a ribonucleoside 5'-triphosphate + H2O = a ribonucleoside 5'-phosphate + diphosphate + H(+). The catalysed reaction is a 2'-deoxyribonucleoside 5'-triphosphate + H2O = a 2'-deoxyribonucleoside 5'-phosphate + diphosphate + H(+). Functionally, nucleoside triphosphate pyrophosphatase. May have a dual role in cell division arrest and in preventing the incorporation of modified nucleotides into cellular nucleic acids. This Helicobacter pylori (strain ATCC 700392 / 26695) (Campylobacter pylori) protein is Nucleoside triphosphate pyrophosphatase.